A 242-amino-acid polypeptide reads, in one-letter code: uncharacterized protein (242 aa).

In terms of domain architecture, HTH gntR-type spans 8–76 (TPLYIQLKQI…QGKGTFVKSP (69 aa)). The segment at residues 36–55 (ENELCTKYNVSRITVRKAIL) is a DNA-binding region (H-T-H motif).

This is an uncharacterized protein from Bacillus subtilis (strain 168).